The chain runs to 315 residues: Olfactory receptor 5P59 (315 aa).

Topologically, residues Met1–Val28 are extracellular. N-linked (GlcNAc...) asparagine glycosylation is present at Asn8. Residues Val29–Ile49 form a helical membrane-spanning segment. Residues Leu50–Gln57 are Cytoplasmic-facing. Residues Leu58–Ser78 form a helical membrane-spanning segment. The Extracellular segment spans residues Ser79 to Ile102. An intrachain disulfide couples Cys100 to Cys193. The helical transmembrane segment at Gln103 to Tyr123 threads the bilayer. Topologically, residues Asp124–Ser136 are cytoplasmic. A helical transmembrane segment spans residues Thr137 to Leu157. The Extracellular portion of the chain corresponds to Asn158 to Val200. A helical membrane pass occupies residues Leu201–Ser221. Topologically, residues Tyr222–Ala241 are cytoplasmic. A helical transmembrane segment spans residues Phe242–Ile262. Over Tyr263–Asn275 the chain is Extracellular. The chain crosses the membrane as a helical span at residues Lys276 to Leu296. Residues Ser297–Ser315 lie on the Cytoplasmic side of the membrane.

It belongs to the G-protein coupled receptor 1 family.

The protein localises to the cell membrane. In terms of biological role, potential odorant receptor. The polypeptide is Olfactory receptor 5P59 (Mus musculus (Mouse)).